We begin with the raw amino-acid sequence, 295 residues long: MKTDTTLPIIAEDGDCGDSKRVRVADSGYTVGGQDRPVKLPKIENNGDVGTSEGTHVLVDALMAEVAIKDKDGKTNAGHGVVSVMGRQRAMTTAVSTVVDEIPSYDIFGIFDGLRLAKFFEDRLRRLVKEEVKACHGRGVAADWNKVMKSCFSEAVGTVGTTTSAVVTIVGKEEVIVLCRGGARVVLYSHDGVALPLCHIHHHKDGVEQILKIHKRKKIDDFIVLACDGLWDVVSDDDTYQLVKRCLYGKLPPDGCISESSSTKAAVILAELAIARGSKENINVIVIDLKSSTVS.

The PPM-type phosphatase domain maps to 78–289 (GHGVVSVMGR…ENINVIVIDL (212 aa)). Asp-112, Gly-113, Asp-228, and Glu-280 together coordinate Mn(2+).

Belongs to the PP2C family. It depends on Mg(2+) as a cofactor. Mn(2+) serves as cofactor.

It catalyses the reaction O-phospho-L-seryl-[protein] + H2O = L-seryl-[protein] + phosphate. The catalysed reaction is O-phospho-L-threonyl-[protein] + H2O = L-threonyl-[protein] + phosphate. This is Probable protein phosphatase 2C 54 from Arabidopsis thaliana (Mouse-ear cress).